We begin with the raw amino-acid sequence, 79 residues long: Phosphoribosylformylglycinamidine synthase subunit PurS (79 aa).

It belongs to the PurS family. Homodimer. Part of the FGAM synthase complex composed of 1 PurL, 1 PurQ and 2 PurS subunits.

It localises to the cytoplasm. It catalyses the reaction N(2)-formyl-N(1)-(5-phospho-beta-D-ribosyl)glycinamide + L-glutamine + ATP + H2O = 2-formamido-N(1)-(5-O-phospho-beta-D-ribosyl)acetamidine + L-glutamate + ADP + phosphate + H(+). Its pathway is purine metabolism; IMP biosynthesis via de novo pathway; 5-amino-1-(5-phospho-D-ribosyl)imidazole from N(2)-formyl-N(1)-(5-phospho-D-ribosyl)glycinamide: step 1/2. Part of the phosphoribosylformylglycinamidine synthase complex involved in the purines biosynthetic pathway. Catalyzes the ATP-dependent conversion of formylglycinamide ribonucleotide (FGAR) and glutamine to yield formylglycinamidine ribonucleotide (FGAM) and glutamate. The FGAM synthase complex is composed of three subunits. PurQ produces an ammonia molecule by converting glutamine to glutamate. PurL transfers the ammonia molecule to FGAR to form FGAM in an ATP-dependent manner. PurS interacts with PurQ and PurL and is thought to assist in the transfer of the ammonia molecule from PurQ to PurL. The chain is Phosphoribosylformylglycinamidine synthase subunit PurS from Mycobacterium leprae (strain TN).